The primary structure comprises 333 residues: tRNA N6-adenosine threonylcarbamoyltransferase (333 aa).

Fe cation is bound by residues His-108 and His-112. Substrate-binding positions include Leu-129–Gly-133, Asp-161, Glu-178, and Ser-258. Asp-286 contributes to the Fe cation binding site.

This sequence belongs to the KAE1 / TsaD family. Requires Fe(2+) as cofactor.

It localises to the cytoplasm. The enzyme catalyses L-threonylcarbamoyladenylate + adenosine(37) in tRNA = N(6)-L-threonylcarbamoyladenosine(37) in tRNA + AMP + H(+). In terms of biological role, required for the formation of a threonylcarbamoyl group on adenosine at position 37 (t(6)A37) in tRNAs that read codons beginning with adenine. Is probably involved in the transfer of the threonylcarbamoyl moiety of threonylcarbamoyl-AMP (TC-AMP) to the N6 group of A37. This Pyrobaculum islandicum (strain DSM 4184 / JCM 9189 / GEO3) protein is tRNA N6-adenosine threonylcarbamoyltransferase.